We begin with the raw amino-acid sequence, 311 residues long: MSELDAKLNKLGVDRIAISPYKQWTRGYMEPGNIGNGYVTGLKVDAGVRDKSDDDVLDGIVSYDRAETKNAYIGQINMTTASSFTGVQGRVIGYDILRSPEVDKAKPLFTETQWDGSELPIYDAKPLQDALVEYFGTEQDRRHYPAPGSFIVCANKGVTAERPKNDADMKPGQGYGVWSAIAISFAKDPTKDSSMFVEDAGVWETPNEDELLEYLEGRRKAMAKSIAECGQDAHASFESSWIGFAYTMMEPGQIGNAITVAPYVSLPIDSIPGGSILTPDKDMEIMENLTMPEWLEKMGYKSLSANNALKY.

Substrate contacts are provided by aspartate 64 and serine 82. At serine 83 the chain carries Pyruvic acid (Ser). The active-site Proton donor is the glutamate 198.

The proenzyme is a hexamer of identical pi chains; each pi chain monomer is cleaved to form a small (or beta) chain and a large (or alpha) chain by non-hydrolytic self-catalysis. Requires pyruvate as cofactor.

The catalysed reaction is L-histidine + H(+) = histamine + CO2. This Lactobacillus sp. (strain 30a) protein is Histidine decarboxylase proenzyme (hdcA).